The chain runs to 308 residues: Pyrroline-5-carboxylate reductase 3 (308 aa).

This sequence belongs to the pyrroline-5-carboxylate reductase family. As to quaternary structure, homodecamer; composed of 5 homodimers.

It localises to the cytoplasm. The catalysed reaction is L-proline + NADP(+) = (S)-1-pyrroline-5-carboxylate + NADPH + 2 H(+). It carries out the reaction L-proline + NAD(+) = (S)-1-pyrroline-5-carboxylate + NADH + 2 H(+). It functions in the pathway amino-acid biosynthesis; L-proline biosynthesis; L-proline from L-glutamate 5-semialdehyde: step 1/1. Oxidoreductase that catalyzes the last step in proline biosynthesis, which corresponds to the reduction of pyrroline-5-carboxylate (P5C) to L-proline using NAD(P)H. Proline is synthesized from either glutamate or ornithine; both are converted to P5C, and then to proline via pyrroline-5-carboxylate reductases (PYCRs). PYCR3 is exclusively linked to the biosynthesis of proline from ornithine. This chain is Pyrroline-5-carboxylate reductase 3, found in Bos taurus (Bovine).